A 207-amino-acid chain; its full sequence is MSKLSSRQQAIIEFIRKEVRDKGYPPSVREIGEAVGLASSSTVHGHLARLEKKGLIRRDPTKPRAIELLSDEDRFQDNFEDSVVRVPVIGKVTAGQPITAIEDVEEYFPLPDNIVTSDKVYMLRVSGNSMIDAGILDGDYVIVRQQHVANNGDIVVAMTEEDEATVKRFFKEKNHFRLQPENATMEPIILEHVTILGKVIGVYRLIH.

Positions 28-48 form a DNA-binding region, H-T-H motif; it reads VREIGEAVGLASSSTVHGHLA. Residues Ser129 and Lys167 each act as for autocatalytic cleavage activity in the active site.

It belongs to the peptidase S24 family. In terms of assembly, homodimer.

The enzyme catalyses Hydrolysis of Ala-|-Gly bond in repressor LexA.. Represses a number of genes involved in the response to DNA damage (SOS response), including recA and lexA. In the presence of single-stranded DNA, RecA interacts with LexA causing an autocatalytic cleavage which disrupts the DNA-binding part of LexA, leading to derepression of the SOS regulon and eventually DNA repair. This Brevibacillus brevis (strain 47 / JCM 6285 / NBRC 100599) protein is LexA repressor.